A 664-amino-acid chain; its full sequence is ATP-dependent zinc metalloprotease FtsH (664 aa).

Residues M1–W9 are Cytoplasmic-facing. A helical membrane pass occupies residues I10–L30. At F31–P136 the chain is on the extracellular side. Residues F137–I157 form a helical membrane-spanning segment. Topologically, residues Y158–E664 are cytoplasmic. G229–T236 contributes to the ATP binding site. Zn(2+) is bound at residue H451. E452 is an active-site residue. H455 and D529 together coordinate Zn(2+). The segment covering I639–E649 has biased composition (basic and acidic residues). The tract at residues I639–E664 is disordered.

In the central section; belongs to the AAA ATPase family. The protein in the C-terminal section; belongs to the peptidase M41 family. Homohexamer. Zn(2+) is required as a cofactor.

It localises to the cell membrane. Functionally, acts as a processive, ATP-dependent zinc metallopeptidase for both cytoplasmic and membrane proteins. Plays a role in the quality control of integral membrane proteins. The polypeptide is ATP-dependent zinc metalloprotease FtsH (Mycoplasmopsis synoviae (strain 53) (Mycoplasma synoviae)).